Consider the following 91-residue polypeptide: Small ribosomal subunit protein uS19 (91 aa).

It belongs to the universal ribosomal protein uS19 family.

Its function is as follows. Protein S19 forms a complex with S13 that binds strongly to the 16S ribosomal RNA. In Synechococcus sp. (strain RCC307), this protein is Small ribosomal subunit protein uS19.